Here is a 500-residue protein sequence, read N- to C-terminus: Probable cytosol aminopeptidase (500 aa).

Mn(2+) contacts are provided by K265 and D270. K277 is a catalytic residue. Residues D288, D347, and E349 each coordinate Mn(2+). Residue R351 is part of the active site.

It belongs to the peptidase M17 family. Mn(2+) serves as cofactor.

The protein localises to the cytoplasm. It carries out the reaction Release of an N-terminal amino acid, Xaa-|-Yaa-, in which Xaa is preferably Leu, but may be other amino acids including Pro although not Arg or Lys, and Yaa may be Pro. Amino acid amides and methyl esters are also readily hydrolyzed, but rates on arylamides are exceedingly low.. The enzyme catalyses Release of an N-terminal amino acid, preferentially leucine, but not glutamic or aspartic acids.. Functionally, presumably involved in the processing and regular turnover of intracellular proteins. Catalyzes the removal of unsubstituted N-terminal amino acids from various peptides. The sequence is that of Probable cytosol aminopeptidase from Rickettsia massiliae (strain Mtu5).